We begin with the raw amino-acid sequence, 353 residues long: Uroporphyrinogen decarboxylase (353 aa).

Substrate contacts are provided by residues 28–32 (RQAGR), Asp78, Tyr155, Ser210, and His325.

The protein belongs to the uroporphyrinogen decarboxylase family. Homodimer.

Its subcellular location is the cytoplasm. The enzyme catalyses uroporphyrinogen III + 4 H(+) = coproporphyrinogen III + 4 CO2. It functions in the pathway porphyrin-containing compound metabolism; protoporphyrin-IX biosynthesis; coproporphyrinogen-III from 5-aminolevulinate: step 4/4. Functionally, catalyzes the decarboxylation of four acetate groups of uroporphyrinogen-III to yield coproporphyrinogen-III. This chain is Uroporphyrinogen decarboxylase, found in Nostoc punctiforme (strain ATCC 29133 / PCC 73102).